Consider the following 72-residue polypeptide: Multiple antibiotic resistance protein MarB (72 aa).

The sequence is that of Multiple antibiotic resistance protein MarB (marB) from Escherichia coli (strain K12).